Reading from the N-terminus, the 629-residue chain is tRNA uridine 5-carboxymethylaminomethyl modification enzyme MnmG (629 aa).

13–18 serves as a coordination point for FAD; the sequence is GGGHAG. 273–287 lines the NAD(+) pocket; that stretch reads GPRYCPSIEDKINRF.

Belongs to the MnmG family. As to quaternary structure, homodimer. Heterotetramer of two MnmE and two MnmG subunits. FAD is required as a cofactor.

Its subcellular location is the cytoplasm. Functionally, NAD-binding protein involved in the addition of a carboxymethylaminomethyl (cmnm) group at the wobble position (U34) of certain tRNAs, forming tRNA-cmnm(5)s(2)U34. This Shewanella piezotolerans (strain WP3 / JCM 13877) protein is tRNA uridine 5-carboxymethylaminomethyl modification enzyme MnmG.